Consider the following 222-residue polypeptide: Beta-casein (222 aa).

Residues 1–15 (MKVLILACLVALALA) form the signal peptide. Thr27 carries the phosphothreonine modification. Ser30, Ser32, Ser33, and Ser34 each carry phosphoserine.

The protein belongs to the beta-casein family. In terms of tissue distribution, mammary gland specific. Secreted in milk.

The protein localises to the secreted. Important role in determination of the surface properties of the casein micelles. In Ovis aries (Sheep), this protein is Beta-casein (CSN2).